Consider the following 162-residue polypeptide: Protein FAM162B (162 aa).

The interval 26–69 is disordered; it reads EATRRPAPALPPRGLPCYSSGGAPSNSGPQGHGEIHRVPTQRRP. Residues 107–127 traverse the membrane as a helical segment; sequence VKACYIMIGLTIIACFAVIVS.

This sequence belongs to the UPF0389 family.

The protein resides in the membrane. This chain is Protein FAM162B (FAM162B), found in Homo sapiens (Human).